A 213-amino-acid chain; its full sequence is Thiamine-phosphate synthase (213 aa).

4-amino-2-methyl-5-(diphosphooxymethyl)pyrimidine is bound by residues 41–45 and Asn-73; that span reads QFRVK. 2 residues coordinate Mg(2+): Asp-74 and Asp-93. Position 112 (Thr-112) interacts with 4-amino-2-methyl-5-(diphosphooxymethyl)pyrimidine. 2-[(2R,5Z)-2-carboxy-4-methylthiazol-5(2H)-ylidene]ethyl phosphate is bound at residue 139–141; the sequence is SAT. Lys-142 is a 4-amino-2-methyl-5-(diphosphooxymethyl)pyrimidine binding site. Position 171 (Gly-171) interacts with 2-[(2R,5Z)-2-carboxy-4-methylthiazol-5(2H)-ylidene]ethyl phosphate.

It belongs to the thiamine-phosphate synthase family. Mg(2+) is required as a cofactor.

It carries out the reaction 2-[(2R,5Z)-2-carboxy-4-methylthiazol-5(2H)-ylidene]ethyl phosphate + 4-amino-2-methyl-5-(diphosphooxymethyl)pyrimidine + 2 H(+) = thiamine phosphate + CO2 + diphosphate. The enzyme catalyses 2-(2-carboxy-4-methylthiazol-5-yl)ethyl phosphate + 4-amino-2-methyl-5-(diphosphooxymethyl)pyrimidine + 2 H(+) = thiamine phosphate + CO2 + diphosphate. It catalyses the reaction 4-methyl-5-(2-phosphooxyethyl)-thiazole + 4-amino-2-methyl-5-(diphosphooxymethyl)pyrimidine + H(+) = thiamine phosphate + diphosphate. It functions in the pathway cofactor biosynthesis; thiamine diphosphate biosynthesis; thiamine phosphate from 4-amino-2-methyl-5-diphosphomethylpyrimidine and 4-methyl-5-(2-phosphoethyl)-thiazole: step 1/1. Functionally, condenses 4-methyl-5-(beta-hydroxyethyl)thiazole monophosphate (THZ-P) and 2-methyl-4-amino-5-hydroxymethyl pyrimidine pyrophosphate (HMP-PP) to form thiamine monophosphate (TMP). This Erythrobacter litoralis (strain HTCC2594) protein is Thiamine-phosphate synthase.